A 1774-amino-acid polypeptide reads, in one-letter code: U3 small nucleolar RNA-associated protein 10 (1774 aa).

The interval 1206 to 1226 is disordered; that stretch reads YDKHSSAGSNDEEAGSESEAE. The span at 1215–1226 shows a compositional bias: acidic residues; sequence NDEEAGSESEAE. Residues 1734–1772 form an HEAT repeat; it reads LVPIIAELLEDEDEEVEYEVRSGLVKVVESVMGEPFDRY.

Belongs to the HEATR1/UTP10 family. Component of the ribosomal small subunit (SSU) processome.

Its subcellular location is the nucleus. It is found in the nucleolus. Functionally, involved in nucleolar processing of pre-18S ribosomal RNA. Involved in ribosome biosynthesis. The sequence is that of U3 small nucleolar RNA-associated protein 10 from Kluyveromyces lactis (strain ATCC 8585 / CBS 2359 / DSM 70799 / NBRC 1267 / NRRL Y-1140 / WM37) (Yeast).